Here is an 89-residue protein sequence, read N- to C-terminus: uncharacterized protein (89 aa).

Transmembrane regions (helical) follow at residues 5-25 (AYLVLINLCGFWVMGIDKRKA), 36-56 (RLWLIAIVFGALGVWLGMQTF), and 67-87 (YGVPLLLVIEAILIAIYYSPF).

Its subcellular location is the cell membrane. This is an uncharacterized protein from Bacillus subtilis (strain 168).